A 261-amino-acid polypeptide reads, in one-letter code: tRNA U34 carboxymethyltransferase (261 aa).

Residues Lys-25, Trp-39, Lys-44, Gly-63, 114-115, Tyr-135, and Arg-250 each bind carboxy-S-adenosyl-L-methionine; that span reads VE.

The protein belongs to the class I-like SAM-binding methyltransferase superfamily. CmoB family. In terms of assembly, homotetramer.

The catalysed reaction is carboxy-S-adenosyl-L-methionine + 5-hydroxyuridine(34) in tRNA = 5-carboxymethoxyuridine(34) in tRNA + S-adenosyl-L-homocysteine + H(+). Its function is as follows. Catalyzes carboxymethyl transfer from carboxy-S-adenosyl-L-methionine (Cx-SAM) to 5-hydroxyuridine (ho5U) to form 5-carboxymethoxyuridine (cmo5U) at position 34 in tRNAs. This Helicobacter pylori (strain P12) protein is tRNA U34 carboxymethyltransferase.